A 432-amino-acid chain; its full sequence is Heme-based aerotactic transducer HemAT (432 aa).

In terms of domain architecture, Methyl-accepting transducer spans 184-420 (YNQTRDEQEE…EVSRAVSHVA (237 aa)).

Belongs to the methyl-accepting chemotaxis (MCP) protein family. In terms of assembly, homotetramer.

Heme-containing signal transducer responsible for aerotaxis, the migratory response toward or away from oxygen. In Bacillus subtilis (strain 168), this protein is Heme-based aerotactic transducer HemAT (hemAT).